The chain runs to 89 residues: Small ribosomal subunit protein uS15 (89 aa).

Residues 1–11 (MSITAERKAEV) show a composition bias toward basic and acidic residues. A disordered region spans residues 1 to 24 (MSITAERKAEVIKTSATKAGDTGS).

It belongs to the universal ribosomal protein uS15 family. Part of the 30S ribosomal subunit. Forms a bridge to the 50S subunit in the 70S ribosome, contacting the 23S rRNA.

One of the primary rRNA binding proteins, it binds directly to 16S rRNA where it helps nucleate assembly of the platform of the 30S subunit by binding and bridging several RNA helices of the 16S rRNA. Its function is as follows. Forms an intersubunit bridge (bridge B4) with the 23S rRNA of the 50S subunit in the ribosome. In Rhodopseudomonas palustris (strain TIE-1), this protein is Small ribosomal subunit protein uS15.